Reading from the N-terminus, the 243-residue chain is DNA repair protein RecO (243 aa).

Belongs to the RecO family.

Functionally, involved in DNA repair and RecF pathway recombination. This is DNA repair protein RecO from Geobacter sulfurreducens (strain ATCC 51573 / DSM 12127 / PCA).